The primary structure comprises 42 residues: Photosystem I reaction center subunit IX (42 aa).

Residues 7-27 (YLSTAPVLSALWFAILAGLLI) traverse the membrane as a helical segment.

Belongs to the PsaJ family.

The protein localises to the plastid. It localises to the chloroplast thylakoid membrane. Functionally, may help in the organization of the PsaE and PsaF subunits. This Chlorokybus atmophyticus (Soil alga) protein is Photosystem I reaction center subunit IX.